The following is a 75-amino-acid chain: Putative antitoxin VapB12 (75 aa).

Functionally, putative antitoxin component of a possible type II toxin-antitoxin (TA) system. The cognate toxin is VapC12. This chain is Putative antitoxin VapB12 (vapB12), found in Mycobacterium tuberculosis (strain CDC 1551 / Oshkosh).